The sequence spans 154 residues: Myoglobin (154 aa).

Residues 2 to 148 form the Globin domain; the sequence is GLSDGEWQLV…FRNDIAAKYK (147 aa). Residue serine 4 is modified to Phosphoserine. Histidine 65 contacts nitrite. An O2-binding site is contributed by histidine 65. Phosphothreonine is present on residues threonine 68 and threonine 75. Histidine 94 lines the heme b pocket. The residue at position 121 (serine 121) is a Phosphoserine.

The protein belongs to the globin family. In terms of assembly, monomeric.

The protein localises to the cytoplasm. It localises to the sarcoplasm. It carries out the reaction Fe(III)-heme b-[protein] + nitric oxide + H2O = Fe(II)-heme b-[protein] + nitrite + 2 H(+). The catalysed reaction is H2O2 + AH2 = A + 2 H2O. Monomeric heme protein which primary function is to store oxygen and facilitate its diffusion within muscle tissues. Reversibly binds oxygen through a pentacoordinated heme iron and enables its timely and efficient release as needed during periods of heightened demand. Depending on the oxidative conditions of tissues and cells, and in addition to its ability to bind oxygen, it also has a nitrite reductase activity whereby it regulates the production of bioactive nitric oxide. Under stress conditions, like hypoxia and anoxia, it also protects cells against reactive oxygen species thanks to its pseudoperoxidase activity. This Mus musculus (Mouse) protein is Myoglobin.